A 409-amino-acid chain; its full sequence is Nucleoprotein (409 aa).

Disordered regions lie at residues 1–31 (MASG…GSSG), 44–84 (LNSP…KGGR), 164–196 (RSGR…EDDL), and 238–258 (VDQV…DDKM). A compositionally biased stretch (low complexity) spans 15–31 (PVIKLGGPKPPKVGSSG). Residues 29-160 (SSGNVSWFQA…GNFRWDFIPL (132 aa)) are RNA-binding. One can recognise a CoV N NTD domain in the interval 31-156 (GNVSWFQAIK…GGPDGNFRWD (126 aa)). Basic residues predominate over residues 70 to 84 (YWRRQARFKPGKGGR). Residues 166–179 (GRSTAASSAASSRA) are compositionally biased toward low complexity. Composition is skewed to basic and acidic residues over residues 180–192 (PSRE…RSGS) and 247–258 (KGKEGNFGDDKM). 2 positions are modified to phosphoserine; by host: S190 and S192. A CoV N CTD domain is found at 215–331 (TKAKADEMAH…QCVDGVGTRP (117 aa)). The interval 226–333 (RYCKRTIPPN…VDGVGTRPKD (108 aa)) is dimerization. An intrachain disulfide couples C320 to C323. Positions 326–409 (GVGTRPKDDE…GDSALGENEL (84 aa)) are disordered. Positions 358-367 (QRPKKEKKPK) are enriched in basic residues. The segment covering 368 to 384 (KQDDEVDKALTSDEERN) has biased composition (basic and acidic residues). T378 bears the Phosphothreonine; by host mark. S379 carries the phosphoserine; by host modification.

It belongs to the gammacoronavirus nucleocapsid protein family. Homooligomer. Both monomeric and oligomeric forms interact with RNA. Interacts with protein M. Interacts with NSP3; this interaction serves to tether the genome to the newly translated replicase-transcriptase complex at a very early stage of infection. Post-translationally, ADP-ribosylated. The ADP-ribosylation is retained in the virion during infection. In terms of processing, phosphorylated on serine and threonine residues.

It is found in the virion. Its subcellular location is the host endoplasmic reticulum-Golgi intermediate compartment. It localises to the host Golgi apparatus. Its function is as follows. Packages the positive strand viral genome RNA into a helical ribonucleocapsid (RNP) and plays a fundamental role during virion assembly through its interactions with the viral genome and membrane protein M. Plays an important role in enhancing the efficiency of subgenomic viral RNA transcription as well as viral replication. In Gallus gallus (Chicken), this protein is Nucleoprotein.